A 400-amino-acid polypeptide reads, in one-letter code: Putative F-box protein At5g41510 (400 aa).

One can recognise an F-box domain in the interval 2 to 47 (ATMISNLPRDLIEEIFSRVPLTSMKAVRLTCKSWNNLSKSESFTKV).

This Arabidopsis thaliana (Mouse-ear cress) protein is Putative F-box protein At5g41510.